Consider the following 348-residue polypeptide: 3',5'-cyclic-nucleotide phosphodiesterase (348 aa).

Mn(2+) is required as a cofactor.

The enzyme catalyses a nucleoside 3',5'-cyclic phosphate + H2O = a nucleoside 5'-phosphate + H(+). In terms of biological role, hydrolyzes cAMP to 5'-AMP and cGMP to 5'-GMP. Does not show phosphohydrolase activity toward various phosphatidylcholine and phosphorylated sugars. This Helicobacter pylori (strain ATCC 700392 / 26695) (Campylobacter pylori) protein is 3',5'-cyclic-nucleotide phosphodiesterase.